We begin with the raw amino-acid sequence, 216 residues long: DNA-directed RNA polymerase subunit alpha (216 aa).

This sequence belongs to the RNA polymerase alpha chain family. In plastids the minimal PEP RNA polymerase catalytic core is composed of four subunits: alpha, beta, beta', and beta''. When a (nuclear-encoded) sigma factor is associated with the core the holoenzyme is formed, which can initiate transcription.

The protein localises to the plastid. Its subcellular location is the chloroplast. It catalyses the reaction RNA(n) + a ribonucleoside 5'-triphosphate = RNA(n+1) + diphosphate. In terms of biological role, DNA-dependent RNA polymerase catalyzes the transcription of DNA into RNA using the four ribonucleoside triphosphates as substrates. The sequence is that of DNA-directed RNA polymerase subunit alpha (rpoA) from Euglena granulata.